Here is a 664-residue protein sequence, read N- to C-terminus: DNA ligase (664 aa).

NAD(+) is bound by residues Asp-32–Asp-36, Ser-81–Leu-82, and Glu-113. Residue Lys-115 is the N6-AMP-lysine intermediate of the active site. Arg-136, Glu-173, Lys-289, and Lys-313 together coordinate NAD(+). The Zn(2+) site is built by Cys-407, Cys-410, Cys-425, and Cys-431. In terms of domain architecture, BRCT spans Ala-586–Ser-664.

It belongs to the NAD-dependent DNA ligase family. LigA subfamily. Mg(2+) is required as a cofactor. Requires Mn(2+) as cofactor.

It catalyses the reaction NAD(+) + (deoxyribonucleotide)n-3'-hydroxyl + 5'-phospho-(deoxyribonucleotide)m = (deoxyribonucleotide)n+m + AMP + beta-nicotinamide D-nucleotide.. Its function is as follows. DNA ligase that catalyzes the formation of phosphodiester linkages between 5'-phosphoryl and 3'-hydroxyl groups in double-stranded DNA using NAD as a coenzyme and as the energy source for the reaction. It is essential for DNA replication and repair of damaged DNA. The protein is DNA ligase of Aeromonas salmonicida (strain A449).